A 314-amino-acid polypeptide reads, in one-letter code: Short-chain dehydrogenase/reductase sthC (314 aa).

A compositionally biased stretch (polar residues) spans 1–10 (MAPAETTGNV). The tract at residues 1-27 (MAPAETTGNVQRPEAGKQSMGSFWTQM) is disordered. 5 residues coordinate NADP(+): Val-56, Lys-80, Asp-105, Asn-132, and Arg-167. Residue Ser-191 is the Proton donor of the active site. NADP(+) is bound by residues Tyr-222 and Lys-226. Tyr-222 (proton acceptor) is an active-site residue. Lys-226 (lowers pKa of active site Tyr) is an active-site residue.

The protein belongs to the short-chain dehydrogenases/reductases (SDR) family.

It carries out the reaction dehydroprobetaenone I + AH2 = probetaenone I + A. It catalyses the reaction betaenone C + AH2 = betaenone B + A. It participates in mycotoxin biosynthesis. Functionally, short-chain dehydrogenase/reductase; part of the gene cluster that mediates the biosynthesis of the phytotoxin stemphyloxin II. The first step of the pathway is the synthesis of dehydroprobetaenone I by the polyketide synthase sthA and the enoyl reductase sthE via condensation of one acetyl-CoA starter unit with 7 malonyl-CoA units and 5 methylations. The C-terminal reductase (R) domain of sthA catalyzes the reductive release of the polyketide chain. Because sthA lacks a designated enoylreductase (ER) domain, the required activity is provided the enoyl reductase sthE. The short-chain dehydrogenase/reductase sthC then catalyzes reduction of dehydroprobetaenone I to probetaenone I. The cytochrome P450 monooxygenase sthF catalyzes successive epoxidation, oxidation (resulting from epoxide opening) and hydroxylation to install a tertiary alcohol in the decaline ring to yield betaenone C from dehydroprobetaenone I and betaenone B from probetaenone I. The FAD-linked oxidoreductase sthB is responsible for the conversion of betaenone C to betaenone A via an intramolecular aldol reaction between C-1 and C-17 to form the bridged tricyclic system in betaenone A. Finally, the cytochrome P450 monooxygenase sthD catalyzes the hydroxylation of C-15 to afford the final metabolite stemphyloxin II. The protein is Short-chain dehydrogenase/reductase sthC of Phaeosphaeria nodorum (strain SN15 / ATCC MYA-4574 / FGSC 10173) (Glume blotch fungus).